Reading from the N-terminus, the 409-residue chain is uncharacterized protein (409 aa).

H46 contacts Zn(2+). E49 (proton acceptor) is an active-site residue. Positions 50 and 126 each coordinate Zn(2+).

The protein belongs to the peptidase M16 family. Zn(2+) serves as cofactor.

This is an uncharacterized protein from Bacillus subtilis (strain 168).